The primary structure comprises 305 residues: MFDLDEWIATVRKCKYLPEHQLKRLCEMVKVILMEESNIQPVRTPVTVCGDIHGQFYDLLELFRVGGELPSTNYIFMGDFVDRGYFSLETFTLFMLLKARYPDKITLLRGNHESRQITQVYGFYDECQTKYGNANVWKYCCQVFDFLTLAAVIDNKILCVHGGLSPEVRTLDQIRILARAQEIPHEGSFCDLMWSDPEDIESWTVSPRGAGWLFGSKVTTEFSQINDLTLIARAHQLVQEGYKYHFADKNLVTVWSAPNYCYRCGNVASVMKVDESLEPEFRIFSAVADEDRTVPPSRKRSEYFI.

Mn(2+) is bound by residues aspartate 51, histidine 53, aspartate 79, and asparagine 111. The active-site Proton donor is histidine 112. Residues histidine 161 and histidine 235 each contribute to the Mn(2+) site.

This sequence belongs to the PPP phosphatase family. PP-6 (PP-V) subfamily. In terms of assembly, interacts with sts5, ekc1 and mis12. Mn(2+) is required as a cofactor.

Its subcellular location is the nucleus. The catalysed reaction is O-phospho-L-seryl-[protein] + H2O = L-seryl-[protein] + phosphate. It catalyses the reaction O-phospho-L-threonyl-[protein] + H2O = L-threonyl-[protein] + phosphate. In terms of biological role, has a role in chromosome segregation. May provide a dynamic connection between kinetochore microtubules and kinetochore chromatin. Negatively regulates mis12. The polypeptide is Serine/threonine-protein phosphatase ppe1 (ppe1) (Schizosaccharomyces pombe (strain 972 / ATCC 24843) (Fission yeast)).